A 332-amino-acid chain; its full sequence is Biotin synthase (332 aa).

Residues 53-282 (HFGKKVKLNM…TKEIRISGGR (230 aa)) form the Radical SAM core domain. [4Fe-4S] cluster-binding residues include cysteine 71, cysteine 75, and cysteine 78. [2Fe-2S] cluster-binding residues include cysteine 115, cysteine 147, cysteine 207, and arginine 277.

The protein belongs to the radical SAM superfamily. Biotin synthase family. In terms of assembly, homodimer. [4Fe-4S] cluster is required as a cofactor. It depends on [2Fe-2S] cluster as a cofactor.

It catalyses the reaction (4R,5S)-dethiobiotin + (sulfur carrier)-SH + 2 reduced [2Fe-2S]-[ferredoxin] + 2 S-adenosyl-L-methionine = (sulfur carrier)-H + biotin + 2 5'-deoxyadenosine + 2 L-methionine + 2 oxidized [2Fe-2S]-[ferredoxin]. The protein operates within cofactor biosynthesis; biotin biosynthesis; biotin from 7,8-diaminononanoate: step 2/2. Its function is as follows. Catalyzes the conversion of dethiobiotin (DTB) to biotin by the insertion of a sulfur atom into dethiobiotin via a radical-based mechanism. The chain is Biotin synthase from Bacillus cereus (strain AH187).